We begin with the raw amino-acid sequence, 473 residues long: Major myo-inositol transporter IolT (473 aa).

Helical transmembrane passes span 14–34 (IILV…VLNG), 49–69 (AFTE…GAVF), 83–103 (ILFL…APNV), 111–131 (FVLG…LAEM), 146–166 (LMIV…GTTM), 172–192 (VWRF…FGMI), 256–276 (IVFI…NSIM), 295–315 (IGNI…IWLL), 325–345 (MTGL…SLVL), 350–370 (ALPY…QGAI), 389–409 (LGMG…SFTF), and 411–431 (ILLA…LGIC).

Belongs to the major facilitator superfamily. Sugar transporter (TC 2.A.1.1) family.

The protein resides in the cell membrane. The protein operates within polyol metabolism; myo-inositol degradation into acetyl-CoA. Functionally, major myo-inositol uptake transporter. This is Major myo-inositol transporter IolT (iolT) from Bacillus subtilis (strain 168).